The primary structure comprises 699 residues: Receptor-type tyrosine-protein phosphatase epsilon (699 aa).

Residues 1–22 (MEPFCPLLLASFSLSLATAGQG) form the signal peptide. Residues 20–36 (GQGNDTTPTESNWTSTT) show a composition bias toward low complexity. The segment at 20-41 (GQGNDTTPTESNWTSTTAGPPD) is disordered. N-linked (GlcNAc...) asparagine glycosylation is found at Asn23 and Asn31. Topologically, residues 23–47 (NDTTPTESNWTSTTAGPPDPGTSQP) are extracellular. A helical membrane pass occupies residues 48 to 68 (LLTWLLLPLLLLLFLLAAYFF). Topologically, residues 69 to 699 (RFRKQRKAVV…DIFSDYANFK (631 aa)) are cytoplasmic. Tyrosine-protein phosphatase domains follow at residues 134 to 393 (FREE…LLEY) and 425 to 688 (LEEE…VQDF). Substrate-binding positions include Asp302, 334–340 (CSAGVGR), and Gln378. The Phosphocysteine intermediate role is filled by Cys334. Cys629 acts as the Phosphocysteine intermediate in catalysis. Tyr695 bears the Phosphotyrosine mark.

It belongs to the protein-tyrosine phosphatase family. Receptor class 4 subfamily. As to quaternary structure, monomer. Isoform 2: Homodimer. Can form oligomers. Dimerization is increased by oxidative stress and decreased by EGFR. Isoform 2 interacts with GRB2. A catalytically active cytoplasmic form (p65) is produced by proteolytic cleavage of either isoform 1, isoform 2 or isoform 3. In terms of processing, isoform 1 and isoform 2 are phosphorylated on tyrosine residues by tyrosine kinase Neu. Post-translationally, N-glycosylated. In terms of tissue distribution, isoform 1 is highly expressed in the brain, lung, spleen and testis. Isoform 2 is highly expressed in thymus, spleen and lung. Isoform 1 and isoform 2 are expressed in primary hepatocytes.

It is found in the cell membrane. The protein localises to the cytoplasm. It catalyses the reaction O-phospho-L-tyrosyl-[protein] + H2O = L-tyrosyl-[protein] + phosphate. Isoform 1 plays a critical role in signaling transduction pathways and phosphoprotein network topology in red blood cells. May play a role in osteoclast formation and function. Acts as a negative regulator of insulin receptor (IR) signaling and is involved in insulin-induced glucose metabolism mainly through direct dephosphorylation and inactivation of IR in hepatocytes and liver. Functionally, isoform 2 acts as a negative regulator of insulin receptor (IR) signaling in skeletal muscle. Regulates insulin-induced tyrosine phosphorylation of insulin receptor (IR) and insulin receptor substrate 1 (IRS-1), phosphorylation of protein kinase B and glycogen synthase kinase-3 and insulin induced stimulation of glucose uptake. In terms of biological role, isoform 1 and isoform 2 act as a negative regulator of FceRI-mediated signal transduction leading to cytokine production and degranulation, most likely by acting at the level of SYK to affect downstream events such as phosphorylation of SLP76 and LAT and mobilization of Ca(2+). This is Receptor-type tyrosine-protein phosphatase epsilon (Ptpre) from Rattus norvegicus (Rat).